Reading from the N-terminus, the 80-residue chain is CLAVATA3/ESR (CLE)-related protein 40 (80 aa).

The signal sequence occupies residues 1-25; it reads MAAMKYKGSVFIILVILLLSSSLLA. The segment at 45–80 is disordered; the sequence is MKKEKKIDGGTANEVEERQVPTGSDPLHHKHIPFTP. Hydroxyproline is present on P65.

The protein belongs to the CLV3/ESR signal peptide family. In terms of tissue distribution, mostly expressed at low levels in stems and apex, and, to a lower extent, in roots, seedlings, leaves, flowers, siliques and pollen.

Its subcellular location is the secreted. It localises to the extracellular space. Extracellular signal peptide secreted by differentiated root cells that regulates root cell fate. Acts with ACR4 as a ligand-receptor pair in a signal transduction pathway, coordinating movement of the root tip and organization of cell divisions in the root meristem. Promotes cell differentiation in the distal root meristem in a dose-dependent manner, especially the transition from columella stem cells (CSC) daughters into columella cells (CCs). Induces ACR4 expression in root quiescent center (QC). Involved in WUX5 QC-specific expression pattern regulation. Regulates the transition of protophloem cells from proliferation to differentiation, thus impinging on postembryonic growth capacity of the root meristem; this signaling pathway requires CRN and CLV2. The protein is CLAVATA3/ESR (CLE)-related protein 40 of Arabidopsis thaliana (Mouse-ear cress).